Here is a 152-residue protein sequence, read N- to C-terminus: Transcriptional repressor NrdR (152 aa).

The segment at 3 to 34 is a zinc-finger region; sequence CPYCQHPDSDVIDTRKLHNGETIRRRRKCEAC. In terms of domain architecture, ATP-cone spans 49-139; the sequence is ITVVKKNGER…VYRSFADIGK (91 aa).

Belongs to the NrdR family. It depends on Zn(2+) as a cofactor.

In terms of biological role, negatively regulates transcription of bacterial ribonucleotide reductase nrd genes and operons by binding to NrdR-boxes. In Roseiflexus sp. (strain RS-1), this protein is Transcriptional repressor NrdR.